We begin with the raw amino-acid sequence, 237 residues long: Sensory rhodopsin-2 (237 aa).

The Extracellular portion of the chain corresponds to 1 to 2 (MA). The helical transmembrane segment at 3–23 (LTTWFWVGAVGMLAGTVLPIR) threads the bilayer. Topologically, residues 24 to 31 (DCIRHPSH) are cytoplasmic. Residues 32–53 (RRYDLVLAGITGLAAIAYTTMG) traverse the membrane as a helical segment. Topologically, residues 54–67 (LGITATTVGDRTVY) are extracellular. A helical membrane pass occupies residues 68-89 (LARYIDWLVTTPLIVLYLAMLA). At 90–92 (RPG) the chain is on the cytoplasmic side. Residues 93 to 115 (HRTSAWLLAADVFVIAAGIAAAL) traverse the membrane as a helical segment. The Extracellular portion of the chain corresponds to 116 to 119 (TTGV). A helical membrane pass occupies residues 120–147 (QRWLFFAVGAAGYAALLYGLLGTLPRAL). Residues 148–150 (GDD) are Cytoplasmic-facing. Residues 151–178 (PRVRSLFVTLRNITVVLWTLYPVVWLLS) traverse the membrane as a helical segment. Topologically, residues 179–186 (PAGIGILQ) are extracellular. Residues 187 to 214 (TEMYTIVVVYLDFISKVAFVAFAVLGAD) traverse the membrane as a helical segment. Lysine 202 bears the N6-(retinylidene)lysine mark. At 215-237 (AVSRLVAADAAAPATAEPTPDGD) the chain is on the cytoplasmic side.

This sequence belongs to the archaeal/bacterial/fungal opsin family. Interacts with HTR-II.

The protein resides in the cell membrane. Its function is as follows. Photophobic photoreceptor responsible for the negative phototaxis. Activates the sensory rhodopsin II transducer (HTR-II) in response to blue light. In Halobacterium salinarum (strain ATCC 700922 / JCM 11081 / NRC-1) (Halobacterium halobium), this protein is Sensory rhodopsin-2 (sop2).